The sequence spans 161 residues: Allophycocyanin alpha chain (161 aa).

Asn-71 is modified (N4-methylasparagine). Cys-81 is a binding site for (2R,3E)-phycocyanobilin.

It belongs to the phycobiliprotein family. Heterodimer of an alpha and a beta chain. Post-translationally, contains one covalently linked phycocyanobilin chromophore.

It is found in the cellular thylakoid membrane. Its function is as follows. Light-harvesting photosynthetic bile pigment-protein from the phycobiliprotein complex. Allophycocyanin has a maximum absorption at approximately 650 nanometers. This chain is Allophycocyanin alpha chain (apcA), found in Synechocystis sp. (strain PCC 6714) (Aphanocapsa sp. (strain PCC 6714)).